A 221-amino-acid polypeptide reads, in one-letter code: Thiamine-phosphate synthase (221 aa).

Residues 49-53 and Asn-85 each bind 4-amino-2-methyl-5-(diphosphooxymethyl)pyrimidine; that span reads QFREK. Positions 86 and 105 each coordinate Mg(2+). Ser-124 is a binding site for 4-amino-2-methyl-5-(diphosphooxymethyl)pyrimidine. 151–153 is a binding site for 2-[(2R,5Z)-2-carboxy-4-methylthiazol-5(2H)-ylidene]ethyl phosphate; it reads TQS. Lys-154 provides a ligand contact to 4-amino-2-methyl-5-(diphosphooxymethyl)pyrimidine. Residues Gly-183 and 203–204 each bind 2-[(2R,5Z)-2-carboxy-4-methylthiazol-5(2H)-ylidene]ethyl phosphate; that span reads IS.

Belongs to the thiamine-phosphate synthase family. The cofactor is Mg(2+).

The catalysed reaction is 2-[(2R,5Z)-2-carboxy-4-methylthiazol-5(2H)-ylidene]ethyl phosphate + 4-amino-2-methyl-5-(diphosphooxymethyl)pyrimidine + 2 H(+) = thiamine phosphate + CO2 + diphosphate. The enzyme catalyses 2-(2-carboxy-4-methylthiazol-5-yl)ethyl phosphate + 4-amino-2-methyl-5-(diphosphooxymethyl)pyrimidine + 2 H(+) = thiamine phosphate + CO2 + diphosphate. It catalyses the reaction 4-methyl-5-(2-phosphooxyethyl)-thiazole + 4-amino-2-methyl-5-(diphosphooxymethyl)pyrimidine + H(+) = thiamine phosphate + diphosphate. The protein operates within cofactor biosynthesis; thiamine diphosphate biosynthesis; thiamine phosphate from 4-amino-2-methyl-5-diphosphomethylpyrimidine and 4-methyl-5-(2-phosphoethyl)-thiazole: step 1/1. In terms of biological role, condenses 4-methyl-5-(beta-hydroxyethyl)thiazole monophosphate (THZ-P) and 2-methyl-4-amino-5-hydroxymethyl pyrimidine pyrophosphate (HMP-PP) to form thiamine monophosphate (TMP). The sequence is that of Thiamine-phosphate synthase from Histophilus somni (strain 129Pt) (Haemophilus somnus).